The sequence spans 441 residues: uncharacterized protein (441 aa).

57–64 (GVRRGGKT) contributes to the ATP binding site.

This is an uncharacterized protein from Methanocaldococcus jannaschii (strain ATCC 43067 / DSM 2661 / JAL-1 / JCM 10045 / NBRC 100440) (Methanococcus jannaschii).